The following is a 162-amino-acid chain: NADH-quinone oxidoreductase subunit I (162 aa).

4Fe-4S ferredoxin-type domains follow at residues 53 to 83 (LRRY…IESE) and 93 to 122 (TRYD…ETRV). Residues Cys-63, Cys-66, Cys-69, Cys-73, Cys-102, Cys-105, Cys-108, and Cys-112 each contribute to the [4Fe-4S] cluster site.

It belongs to the complex I 23 kDa subunit family. In terms of assembly, NDH-1 is composed of 14 different subunits. Subunits NuoA, H, J, K, L, M, N constitute the membrane sector of the complex. It depends on [4Fe-4S] cluster as a cofactor.

It localises to the cell inner membrane. It catalyses the reaction a quinone + NADH + 5 H(+)(in) = a quinol + NAD(+) + 4 H(+)(out). In terms of biological role, NDH-1 shuttles electrons from NADH, via FMN and iron-sulfur (Fe-S) centers, to quinones in the respiratory chain. The immediate electron acceptor for the enzyme in this species is believed to be ubiquinone. Couples the redox reaction to proton translocation (for every two electrons transferred, four hydrogen ions are translocated across the cytoplasmic membrane), and thus conserves the redox energy in a proton gradient. The sequence is that of NADH-quinone oxidoreductase subunit I from Nitrosomonas eutropha (strain DSM 101675 / C91 / Nm57).